Here is a 728-residue protein sequence, read N- to C-terminus: Phosphoribosylformylglycinamidine synthase subunit PurL (728 aa).

The active site involves His-42. 2 residues coordinate ATP: Tyr-45 and Lys-84. Glu-86 is a Mg(2+) binding site. Residues Ser-87–His-90 and Arg-109 contribute to the substrate site. The Proton acceptor role is filled by His-88. Asp-110 is a Mg(2+) binding site. Position 237 (Gln-237) interacts with substrate. Asp-265 contacts Mg(2+). Glu-309–Gln-311 contributes to the substrate binding site. ATP is bound by residues Asp-491 and Gly-528. Asn-529 serves as a coordination point for Mg(2+). Ser-531 provides a ligand contact to substrate.

Belongs to the FGAMS family. Monomer. Part of the FGAM synthase complex composed of 1 PurL, 1 PurQ and 2 PurS subunits.

Its subcellular location is the cytoplasm. It catalyses the reaction N(2)-formyl-N(1)-(5-phospho-beta-D-ribosyl)glycinamide + L-glutamine + ATP + H2O = 2-formamido-N(1)-(5-O-phospho-beta-D-ribosyl)acetamidine + L-glutamate + ADP + phosphate + H(+). Its pathway is purine metabolism; IMP biosynthesis via de novo pathway; 5-amino-1-(5-phospho-D-ribosyl)imidazole from N(2)-formyl-N(1)-(5-phospho-D-ribosyl)glycinamide: step 1/2. Part of the phosphoribosylformylglycinamidine synthase complex involved in the purines biosynthetic pathway. Catalyzes the ATP-dependent conversion of formylglycinamide ribonucleotide (FGAR) and glutamine to yield formylglycinamidine ribonucleotide (FGAM) and glutamate. The FGAM synthase complex is composed of three subunits. PurQ produces an ammonia molecule by converting glutamine to glutamate. PurL transfers the ammonia molecule to FGAR to form FGAM in an ATP-dependent manner. PurS interacts with PurQ and PurL and is thought to assist in the transfer of the ammonia molecule from PurQ to PurL. The polypeptide is Phosphoribosylformylglycinamidine synthase subunit PurL (Campylobacter jejuni subsp. jejuni serotype O:2 (strain ATCC 700819 / NCTC 11168)).